The chain runs to 1577 residues: MAP kinase-activating death domain protein (1577 aa).

The region spanning 13–267 (YLVIVGARHP…VPVSGQKRVD (255 aa)) is the uDENN domain. The segment covering 106–121 (KEKVEGGAGPRGKEGA) has biased composition (basic and acidic residues). The tract at residues 106–166 (KEKVEGGAGP…WGKRRAKAGS (61 aa)) is disordered. Low complexity predominate over residues 123 to 140 (TSGASEEAATGSSESGST). Residues 141–156 (LQPPSADSTPDINQSP) show a composition bias toward polar residues. A Phosphoserine modification is found at serine 155. The 141-residue stretch at 288-428 (RFTLVDFPLH…ESLELKKHLK (141 aa)) folds into the cDENN domain. The 135-residue stretch at 430-564 (ALASMSLNTQ…LNPSNYAFQR (135 aa)) folds into the dDENN domain. 2 disordered regions span residues 604-635 (LSVPPERDSDSDPTEDSGSDSQDYDDSSSSYS) and 676-840 (QPQK…NSTE). A compositionally biased stretch (acidic residues) spans 614 to 629 (SDPTEDSGSDSQDYDD). A phosphoserine mark is found at serine 688 and serine 691. Positions 688–698 (SENSQENPPLR) are enriched in polar residues. Over residues 699-715 (SSSSTTASSSPSTVVHS) the composition is skewed to low complexity. Polar residues predominate over residues 793–803 (PRFSQHVSGSR). Phosphoserine occurs at positions 812, 817, and 819. Positions 826–839 (RASSPNSTVSNNST) are enriched in low complexity. 6 positions are modified to phosphoserine: serine 857, serine 861, serine 915, serine 920, serine 929, and serine 1058. Disordered stretches follow at residues 912–940 (QKSSVIKHSPTVKREPSSPQGRSSNSSEN), 1050–1109 (KEPD…DTRS), and 1127–1272 (EVKK…RSSE). Over residues 928-938 (SSPQGRSSNSS) the composition is skewed to low complexity. 2 positions are modified to phosphothreonine: threonine 1060 and threonine 1065. A Phosphoserine modification is found at serine 1109. Residues 1127-1141 (EVKKQKALEKQRPEG) are compositionally biased toward basic and acidic residues. Polar residues predominate over residues 1157–1172 (QMSADSGVSLTSASQR). Low complexity predominate over residues 1189–1203 (SSSQDSEVSTVSNSS). Polar residues predominate over residues 1232 to 1248 (SRATLSDSEIETNSATS). The residue at position 1235 (threonine 1235) is a Phosphothreonine. Serine 1237 and serine 1266 each carry phosphoserine. Positions 1336 to 1411 (GMDQGPQEMI…GLVYSQQVNE (76 aa)) constitute a Death domain.

Belongs to the MADD family. In terms of assembly, interacts (via death domain) with TNFRSF1A (via death domain). Interacts with PIDD1. Interacts with YWHAZ. Interacts (via death domain) with KIF1B; links the motor KIF1B to Rab3-carrying vesicles in anterograde synaptic vesicle transport. Interacts with KIF1A. Interacts (via uDENN domain) with RAB3A, RAB3B, RAB3C and RAB3D; the GTP-bound form of the Rab proteins is preferred for interaction. As to expression, expressed in the brain.

Its subcellular location is the cell membrane. The protein localises to the cytoplasm. It is found in the cell projection. The protein resides in the axon. Functionally, guanyl-nucleotide exchange factor that regulates small GTPases of the Rab family. Converts GDP-bound inactive form of RAB27A and RAB27B to the GTP-bound active forms. Converts GDP-bound inactive form of RAB3A, RAB3C and RAB3D to the GTP-bound active forms, GTPases involved in synaptic vesicle exocytosis and vesicle secretion. Plays a role in synaptic vesicle formation and in vesicle trafficking at the neuromuscular junction. Involved in up-regulating a post-docking step of synaptic exocytosis in central synapses. Probably by binding to the motor proteins KIF1B and KIF1A, mediates motor-dependent transport of GTP-RAB3A-positive vesicles to the presynaptic nerve terminals. Plays a role in TNFA-mediated activation of the MAPK pathway, including ERK1/2. May link TNFRSF1A with MAP kinase activation. May be involved in the regulation of TNFA-induced apoptosis. The sequence is that of MAP kinase-activating death domain protein from Mus musculus (Mouse).